The chain runs to 423 residues: NDP-N-acetyl-D-galactosaminuronic acid dehydrogenase (423 aa).

11-28 (TISVVGLGYIGLPTATVL) lines the NAD(+) pocket. Catalysis depends on Lys-218, which acts as the Proton donor/acceptor. The active-site Nucleophile is Cys-272.

This sequence belongs to the UDP-glucose/GDP-mannose dehydrogenase family.

Probably involved in synthesis of sugar components of EPS I, by converting NDP-N-acetyl-D-galactosamine into NDP-N-acetyl-D-galactosaminuronic acid. The protein is NDP-N-acetyl-D-galactosaminuronic acid dehydrogenase (epsD) of Ralstonia solanacearum (Pseudomonas solanacearum).